Reading from the N-terminus, the 249-residue chain is DNA polymerase sliding clamp (249 aa).

The protein belongs to the PCNA family. In terms of assembly, homotrimer which circularizes head-to-tail (head is a N-terminus, tail is at C-terminus) to form a toroid. RFC opens the toroid so it can load on DNA. Interacts with both Pol I (pol) and Pol II (polB-polC), with Hel308 (hjm) and with Hjc. Interaction with the C-terminal PIP-box of RfcL may stabilize the toroidal structure.

In terms of biological role, sliding clamp subunit that acts as a moving platform for DNA processing. Responsible for tethering the catalytic subunit of DNA polymerase to DNA during high-speed replication. Unlike its eukaryotic paralog, loads on circular DNA without the replication factor C (RFC) clamp loader, although RFC greatly increases loading efficiency. Stimulates the ATPase activity of replication factor C (RFC) in the presence of ssDNA. Stimulates the helicase activity of Hel308 and may alter its substrate specificity. This is DNA polymerase sliding clamp from Pyrococcus furiosus (strain ATCC 43587 / DSM 3638 / JCM 8422 / Vc1).